The chain runs to 201 residues: Lipopolysaccharide core heptose(II)-phosphate phosphatase (201 aa).

An N-terminal signal peptide occupies residues 1-35 (MLAFTLRFIKNKRYLATLAGALVIIAGLTSQHAWS).

Belongs to the phosphoglycerate mutase family. Ais subfamily.

It localises to the periplasm. The protein operates within bacterial outer membrane biogenesis; lipopolysaccharide metabolism. Its function is as follows. Catalyzes the dephosphorylation of heptose(II) of the outer membrane lipopolysaccharide core. This Salmonella newport (strain SL254) protein is Lipopolysaccharide core heptose(II)-phosphate phosphatase.